Consider the following 609-residue polypeptide: Proline--tRNA ligase (609 aa).

This sequence belongs to the class-II aminoacyl-tRNA synthetase family. ProS type 1 subfamily. As to quaternary structure, homodimer.

Its subcellular location is the cytoplasm. It catalyses the reaction tRNA(Pro) + L-proline + ATP = L-prolyl-tRNA(Pro) + AMP + diphosphate. Functionally, catalyzes the attachment of proline to tRNA(Pro) in a two-step reaction: proline is first activated by ATP to form Pro-AMP and then transferred to the acceptor end of tRNA(Pro). As ProRS can inadvertently accommodate and process non-cognate amino acids such as alanine and cysteine, to avoid such errors it has two additional distinct editing activities against alanine. One activity is designated as 'pretransfer' editing and involves the tRNA(Pro)-independent hydrolysis of activated Ala-AMP. The other activity is designated 'posttransfer' editing and involves deacylation of mischarged Ala-tRNA(Pro). The misacylated Cys-tRNA(Pro) is not edited by ProRS. This chain is Proline--tRNA ligase, found in Synechococcus sp. (strain JA-2-3B'a(2-13)) (Cyanobacteria bacterium Yellowstone B-Prime).